A 202-amino-acid chain; its full sequence is Translation initiation factor IF-3 (202 aa).

Residues 172 to 202 (KTRASARHPEVPGAGSVQDIDATGDTDGSPH) are disordered.

This sequence belongs to the IF-3 family. Monomer.

The protein localises to the cytoplasm. IF-3 binds to the 30S ribosomal subunit and shifts the equilibrium between 70S ribosomes and their 50S and 30S subunits in favor of the free subunits, thus enhancing the availability of 30S subunits on which protein synthesis initiation begins. This is Translation initiation factor IF-3 from Mycobacterium leprae (strain TN).